A 156-amino-acid chain; its full sequence is ATP synthase subunit b (156 aa).

Residues 7-27 (LIGQAIWFALFVFFCMKFVWP) form a helical membrane-spanning segment.

The protein belongs to the ATPase B chain family. F-type ATPases have 2 components, F(1) - the catalytic core - and F(0) - the membrane proton channel. F(1) has five subunits: alpha(3), beta(3), gamma(1), delta(1), epsilon(1). F(0) has three main subunits: a(1), b(2) and c(10-14). The alpha and beta chains form an alternating ring which encloses part of the gamma chain. F(1) is attached to F(0) by a central stalk formed by the gamma and epsilon chains, while a peripheral stalk is formed by the delta and b chains.

The protein localises to the cell inner membrane. In terms of biological role, f(1)F(0) ATP synthase produces ATP from ADP in the presence of a proton or sodium gradient. F-type ATPases consist of two structural domains, F(1) containing the extramembraneous catalytic core and F(0) containing the membrane proton channel, linked together by a central stalk and a peripheral stalk. During catalysis, ATP synthesis in the catalytic domain of F(1) is coupled via a rotary mechanism of the central stalk subunits to proton translocation. Its function is as follows. Component of the F(0) channel, it forms part of the peripheral stalk, linking F(1) to F(0). The sequence is that of ATP synthase subunit b from Alcanivorax borkumensis (strain ATCC 700651 / DSM 11573 / NCIMB 13689 / SK2).